We begin with the raw amino-acid sequence, 548 residues long: Chaperone Ric-8A (548 aa).

Disordered regions lie at residues 443–484 (DPGH…EGMT) and 517–548 (GKMT…SDTN).

The protein belongs to the synembryn family.

The protein resides in the cytoplasm. It is found in the cell cortex. Its function is as follows. Chaperone that specifically binds and folds nascent G alpha proteins prior to G protein heterotrimer formation, promoting their stability and activity: folds GNAI1, GNAO1, GNA13 and GNAQ. Does not fold G(s) G-alpha proteins GNAS nor GNAL. Also acts as a guanine nucleotide exchange factor (GEF) for G alpha proteins by stimulating exchange of bound GDP for free GTP. This is Chaperone Ric-8A (ric8a) from Danio rerio (Zebrafish).